Reading from the N-terminus, the 188-residue chain is Phosphoribosylglycinamide formyltransferase (188 aa).

A N(1)-(5-phospho-beta-D-ribosyl)glycinamide-binding site is contributed by 12–14 (GSN). Residues Lys66, 91 to 94 (MRLV), and Asn108 each bind (6R)-10-formyltetrahydrofolate. His110 serves as the catalytic Proton donor.

Belongs to the GART family.

The catalysed reaction is N(1)-(5-phospho-beta-D-ribosyl)glycinamide + (6R)-10-formyltetrahydrofolate = N(2)-formyl-N(1)-(5-phospho-beta-D-ribosyl)glycinamide + (6S)-5,6,7,8-tetrahydrofolate + H(+). The protein operates within purine metabolism; IMP biosynthesis via de novo pathway; N(2)-formyl-N(1)-(5-phospho-D-ribosyl)glycinamide from N(1)-(5-phospho-D-ribosyl)glycinamide (10-formyl THF route): step 1/1. In terms of biological role, catalyzes the transfer of a formyl group from 10-formyltetrahydrofolate to 5-phospho-ribosyl-glycinamide (GAR), producing 5-phospho-ribosyl-N-formylglycinamide (FGAR) and tetrahydrofolate. The polypeptide is Phosphoribosylglycinamide formyltransferase (Staphylococcus epidermidis (strain ATCC 35984 / DSM 28319 / BCRC 17069 / CCUG 31568 / BM 3577 / RP62A)).